The primary structure comprises 87 residues: Small ribosomal subunit protein bS16c (87 aa).

This sequence belongs to the bacterial ribosomal protein bS16 family.

It is found in the plastid. Its subcellular location is the chloroplast. The sequence is that of Small ribosomal subunit protein bS16c from Zygnema circumcarinatum (Green alga).